The primary structure comprises 199 residues: 3-isopropylmalate dehydratase small subunit (199 aa).

It belongs to the LeuD family. LeuD type 1 subfamily. In terms of assembly, heterodimer of LeuC and LeuD.

It carries out the reaction (2R,3S)-3-isopropylmalate = (2S)-2-isopropylmalate. The protein operates within amino-acid biosynthesis; L-leucine biosynthesis; L-leucine from 3-methyl-2-oxobutanoate: step 2/4. Catalyzes the isomerization between 2-isopropylmalate and 3-isopropylmalate, via the formation of 2-isopropylmaleate. The sequence is that of 3-isopropylmalate dehydratase small subunit from Aeromonas salmonicida (strain A449).